The following is a 131-amino-acid chain: Translation initiation factor 5A (131 aa).

At Lys37 the chain carries Hypusine.

Belongs to the eIF-5A family.

Its subcellular location is the cytoplasm. Functions by promoting the formation of the first peptide bond. The chain is Translation initiation factor 5A (eIF5A) from Methanococcus maripaludis (strain C5 / ATCC BAA-1333).